Here is a 297-residue protein sequence, read N- to C-terminus: Acetylglutamate kinase (297 aa).

Substrate is bound by residues 68–69, arginine 90, and asparagine 195; that span reads GG.

This sequence belongs to the acetylglutamate kinase family. ArgB subfamily.

Its subcellular location is the cytoplasm. It catalyses the reaction N-acetyl-L-glutamate + ATP = N-acetyl-L-glutamyl 5-phosphate + ADP. It participates in amino-acid biosynthesis; L-arginine biosynthesis; N(2)-acetyl-L-ornithine from L-glutamate: step 2/4. Its function is as follows. Catalyzes the ATP-dependent phosphorylation of N-acetyl-L-glutamate. The polypeptide is Acetylglutamate kinase (Mesorhizobium japonicum (strain LMG 29417 / CECT 9101 / MAFF 303099) (Mesorhizobium loti (strain MAFF 303099))).